Here is a 459-residue protein sequence, read N- to C-terminus: Bifunctional protein GlmU (459 aa).

Residues 1–230 (MSNRFAVILA…FDETLGVNDR (230 aa)) are pyrophosphorylase. UDP-N-acetyl-alpha-D-glucosamine contacts are provided by residues 9–12 (LAAG), K23, Q73, and 78–79 (GT). D103 provides a ligand contact to Mg(2+). UDP-N-acetyl-alpha-D-glucosamine contacts are provided by G140, E155, N170, and N228. Position 228 (N228) interacts with Mg(2+). The interval 231 to 251 (VALSQAEVIMKNRINHKNMVN) is linker. The interval 252 to 459 (GVTIIDPSNT…VDQLLNKKKS (208 aa)) is N-acetyltransferase. UDP-N-acetyl-alpha-D-glucosamine is bound by residues R333 and K351. Catalysis depends on H363, which acts as the Proton acceptor. Residues Y366 and N377 each contribute to the UDP-N-acetyl-alpha-D-glucosamine site. Residues 386–387 (NY), A423, and R440 contribute to the acetyl-CoA site.

It in the N-terminal section; belongs to the N-acetylglucosamine-1-phosphate uridyltransferase family. The protein in the C-terminal section; belongs to the transferase hexapeptide repeat family. Homotrimer. It depends on Mg(2+) as a cofactor.

The protein resides in the cytoplasm. The catalysed reaction is alpha-D-glucosamine 1-phosphate + acetyl-CoA = N-acetyl-alpha-D-glucosamine 1-phosphate + CoA + H(+). It catalyses the reaction N-acetyl-alpha-D-glucosamine 1-phosphate + UTP + H(+) = UDP-N-acetyl-alpha-D-glucosamine + diphosphate. It functions in the pathway nucleotide-sugar biosynthesis; UDP-N-acetyl-alpha-D-glucosamine biosynthesis; N-acetyl-alpha-D-glucosamine 1-phosphate from alpha-D-glucosamine 6-phosphate (route II): step 2/2. The protein operates within nucleotide-sugar biosynthesis; UDP-N-acetyl-alpha-D-glucosamine biosynthesis; UDP-N-acetyl-alpha-D-glucosamine from N-acetyl-alpha-D-glucosamine 1-phosphate: step 1/1. Its pathway is bacterial outer membrane biogenesis; LPS lipid A biosynthesis. Its function is as follows. Catalyzes the last two sequential reactions in the de novo biosynthetic pathway for UDP-N-acetylglucosamine (UDP-GlcNAc). The C-terminal domain catalyzes the transfer of acetyl group from acetyl coenzyme A to glucosamine-1-phosphate (GlcN-1-P) to produce N-acetylglucosamine-1-phosphate (GlcNAc-1-P), which is converted into UDP-GlcNAc by the transfer of uridine 5-monophosphate (from uridine 5-triphosphate), a reaction catalyzed by the N-terminal domain. The chain is Bifunctional protein GlmU from Bacillus cytotoxicus (strain DSM 22905 / CIP 110041 / 391-98 / NVH 391-98).